We begin with the raw amino-acid sequence, 165 residues long: uncharacterized protein (165 aa).

The next 5 membrane-spanning stretches (helical) occupy residues Gly-30–Gly-50, Gly-65–Leu-85, Ser-86–Gly-106, Phe-108–Gly-128, and Trp-131–Gly-151.

It to E.coli YcdZ.

The protein resides in the cell membrane. This is an uncharacterized protein from Escherichia coli (strain K12).